Here is a 365-residue protein sequence, read N- to C-terminus: DNA replication and repair protein RecF (365 aa).

30-37 (GDNGEGKT) lines the ATP pocket.

It belongs to the RecF family.

The protein localises to the cytoplasm. The RecF protein is involved in DNA metabolism; it is required for DNA replication and normal SOS inducibility. RecF binds preferentially to single-stranded, linear DNA. It also seems to bind ATP. This Leptospira interrogans serogroup Icterohaemorrhagiae serovar Lai (strain 56601) protein is DNA replication and repair protein RecF.